Consider the following 289-residue polypeptide: 4-diphosphocytidyl-2-C-methyl-D-erythritol kinase (289 aa).

K10 is a catalytic residue. Residue 94 to 104 coordinates ATP; that stretch reads PVAAGLAGGSS. D136 is an active-site residue.

The protein belongs to the GHMP kinase family. IspE subfamily.

It catalyses the reaction 4-CDP-2-C-methyl-D-erythritol + ATP = 4-CDP-2-C-methyl-D-erythritol 2-phosphate + ADP + H(+). It participates in isoprenoid biosynthesis; isopentenyl diphosphate biosynthesis via DXP pathway; isopentenyl diphosphate from 1-deoxy-D-xylulose 5-phosphate: step 3/6. Catalyzes the phosphorylation of the position 2 hydroxy group of 4-diphosphocytidyl-2C-methyl-D-erythritol. This is 4-diphosphocytidyl-2-C-methyl-D-erythritol kinase from Bacillus cytotoxicus (strain DSM 22905 / CIP 110041 / 391-98 / NVH 391-98).